Reading from the N-terminus, the 484-residue chain is Ribonuclease Y (484 aa).

The chain crosses the membrane as a helical span at residues 18–38 (FFAFLFLIIIAFNLCLFAYLY). A KH domain is found at 166-234 (SPSFLISESD…LTVRNILMND (69 aa)). One can recognise an HD domain in the interval 293-385 (VLSHSLETAF…TQIADKLSAA (93 aa)).

This sequence belongs to the RNase Y family.

The protein localises to the cell membrane. Functionally, endoribonuclease that initiates mRNA decay. This is Ribonuclease Y from Mycoplasma genitalium (strain ATCC 33530 / DSM 19775 / NCTC 10195 / G37) (Mycoplasmoides genitalium).